Reading from the N-terminus, the 153-residue chain is Large ribosomal subunit protein uL15 (153 aa).

Residues 21 to 41 form a disordered region; that stretch reads RGIGSGKGKTGGRGIKGQKSR. The segment covering 23–35 has biased composition (gly residues); sequence IGSGKGKTGGRGI.

Belongs to the universal ribosomal protein uL15 family. In terms of assembly, part of the 50S ribosomal subunit.

Binds to the 23S rRNA. The polypeptide is Large ribosomal subunit protein uL15 (Rickettsia africae (strain ESF-5)).